Consider the following 1082-residue polypeptide: CRISPR-associated endonuclease Cas9 (1082 aa).

The For RuvC-like nuclease domain role is filled by Asp16. Mg(2+) is bound by residues Asp16, Glu504, and Glu508. In terms of domain architecture, HNH Cas9-type spans 512-667; the sequence is SFKDRKEIEK…DEDGFKERNL (156 aa). The active-site Proton acceptor for HNH nuclease domain is the His588. His723 contacts Mg(2+).

It belongs to the CRISPR-associated protein Cas9 family. Subtype II-C subfamily. Monomer. Binds crRNA and tracrRNA. The cofactor is Mg(2+).

Its function is as follows. CRISPR (clustered regularly interspaced short palindromic repeat) is an adaptive immune system that provides protection against mobile genetic elements (viruses, transposable elements and conjugative plasmids). CRISPR clusters contain spacers, sequences complementary to antecedent mobile elements, and target invading nucleic acids. CRISPR clusters are transcribed and processed into CRISPR RNA (crRNA). In type II CRISPR systems correct processing of pre-crRNA requires a trans-encoded small RNA (tracrRNA), endogenous ribonuclease 3 (rnc) and this protein. The tracrRNA serves as a guide for ribonuclease 3-aided processing of pre-crRNA. Subsequently Cas9/crRNA/tracrRNA endonucleolytically cleaves linear or circular dsDNA target complementary to the spacer; Cas9 is inactive in the absence of the 2 guide RNAs (gRNA). Cas9 recognizes the protospacer adjacent motif (PAM) in the CRISPR repeat sequences to help distinguish self versus nonself, as targets within the bacterial CRISPR locus do not have PAMs. PAM recognition is also required for catalytic activity. Cuts target DNA in Cas9:gRNAs mixing experiments with C.jejuni strain NCTC 11168 and P.multocoda strain Pm70. The sequence is that of CRISPR-associated endonuclease Cas9 from Neisseria meningitidis serogroup A / serotype 4A (strain DSM 15465 / Z2491).